The following is a 322-amino-acid chain: Transaldolase (322 aa).

Lys-136 (schiff-base intermediate with substrate) is an active-site residue.

It belongs to the transaldolase family. Type 1 subfamily. In terms of assembly, homodimer.

Its subcellular location is the cytoplasm. It carries out the reaction D-sedoheptulose 7-phosphate + D-glyceraldehyde 3-phosphate = D-erythrose 4-phosphate + beta-D-fructose 6-phosphate. It participates in carbohydrate degradation; pentose phosphate pathway; D-glyceraldehyde 3-phosphate and beta-D-fructose 6-phosphate from D-ribose 5-phosphate and D-xylulose 5-phosphate (non-oxidative stage): step 2/3. Functionally, transaldolase is important for the balance of metabolites in the pentose-phosphate pathway. The protein is Transaldolase of Xanthomonas oryzae pv. oryzae (strain PXO99A).